The chain runs to 203 residues: ATP-dependent Clp protease proteolytic subunit 1 (203 aa).

Ser103 (nucleophile) is an active-site residue. His128 is a catalytic residue.

Belongs to the peptidase S14 family. As to quaternary structure, fourteen ClpP subunits assemble into 2 heptameric rings which stack back to back to give a disk-like structure with a central cavity, resembling the structure of eukaryotic proteasomes.

The protein resides in the cytoplasm. It carries out the reaction Hydrolysis of proteins to small peptides in the presence of ATP and magnesium. alpha-casein is the usual test substrate. In the absence of ATP, only oligopeptides shorter than five residues are hydrolyzed (such as succinyl-Leu-Tyr-|-NHMec, and Leu-Tyr-Leu-|-Tyr-Trp, in which cleavage of the -Tyr-|-Leu- and -Tyr-|-Trp bonds also occurs).. Functionally, cleaves peptides in various proteins in a process that requires ATP hydrolysis. Has a chymotrypsin-like activity. Plays a major role in the degradation of misfolded proteins. The chain is ATP-dependent Clp protease proteolytic subunit 1 from Treponema pallidum (strain Nichols).